A 341-amino-acid chain; its full sequence is Glycerol-3-phosphate dehydrogenase [NAD(P)+] (341 aa).

Positions 14, 15, 35, and 108 each coordinate NADPH. Residues lysine 108 and glycine 136 each coordinate sn-glycerol 3-phosphate. Alanine 140 contacts NADPH. Residues lysine 191, aspartate 244, serine 254, arginine 255, and asparagine 256 each contribute to the sn-glycerol 3-phosphate site. Lysine 191 (proton acceptor) is an active-site residue. Arginine 255 is an NADPH binding site. Residues valine 279 and glutamate 281 each coordinate NADPH.

It belongs to the NAD-dependent glycerol-3-phosphate dehydrogenase family.

The protein resides in the cytoplasm. It carries out the reaction sn-glycerol 3-phosphate + NAD(+) = dihydroxyacetone phosphate + NADH + H(+). The enzyme catalyses sn-glycerol 3-phosphate + NADP(+) = dihydroxyacetone phosphate + NADPH + H(+). It functions in the pathway membrane lipid metabolism; glycerophospholipid metabolism. In terms of biological role, catalyzes the reduction of the glycolytic intermediate dihydroxyacetone phosphate (DHAP) to sn-glycerol 3-phosphate (G3P), the key precursor for phospholipid synthesis. The sequence is that of Glycerol-3-phosphate dehydrogenase [NAD(P)+] from Pseudomonas fluorescens (strain ATCC BAA-477 / NRRL B-23932 / Pf-5).